The sequence spans 514 residues: Pantetheinase (514 aa).

Positions 1–22 are cleaved as a signal peptide; that stretch reads MITSRLLVYVAVLVLCVIKVSS. Asn39 carries N-linked (GlcNAc...) asparagine glycosylation. In terms of domain architecture, CN hydrolase spans 40-307; the sequence is ATLVPVSHEE…GKLLLSQLDS (268 aa). The active-site Proton acceptor is the Glu80. Asn87 and Asn147 each carry an N-linked (GlcNAc...) asparagine glycan. The active-site Proton donor is the Lys179. The active-site Nucleophile is Cys212. Asn316 and Asn354 each carry an N-linked (GlcNAc...) asparagine glycan. Residue Asp492 is the site of GPI-anchor amidated aspartate attachment. Positions 493–514 are cleaved as a propeptide — removed in mature form; sequence PRSQVPGVMLLVIIPIVCSLSW.

The protein belongs to the carbon-nitrogen hydrolase superfamily. BTD/VNN family. Monomer.

It localises to the cell membrane. The catalysed reaction is (R)-pantetheine + H2O = cysteamine + (R)-pantothenate. In terms of biological role, amidohydrolase that hydrolyzes specifically one of the carboamide linkages in D-pantetheine thus recycling pantothenic acid (vitamin B5) and releasing cysteamine. In Canis lupus familiaris (Dog), this protein is Pantetheinase (VNN1).